A 307-amino-acid polypeptide reads, in one-letter code: UPF0276 protein PM0211 (307 aa).

Belongs to the UPF0276 family.

This Pasteurella multocida (strain Pm70) protein is UPF0276 protein PM0211.